The chain runs to 541 residues: Presenilin homolog (541 aa).

Composition is skewed to polar residues over residues 1-14 (MAAV…SSGL) and 43-52 (NNYGSSNQDQ). Disordered regions lie at residues 1–52 (MAAV…NQDQ) and 69–92 (CGSR…NEME). Topologically, residues 1 to 106 (MAAVNLQASC…LKYGAQHVIK (106 aa)) are cytoplasmic. The chain crosses the membrane as a helical span at residues 107 to 127 (LFVPVSLCMLVVVATINSISF). At 128–154 (YNSTDVYLLYTPFHEQSPEPSVKFWSA) the chain is on the lumenal side. The N-linked (GlcNAc...) asparagine glycan is linked to Asn129. A helical transmembrane segment spans residues 155–175 (LANSLILMSVVVVMTFLLIVL). At 176–182 (YKKRCYR) the chain is on the cytoplasmic side. The helical transmembrane segment at 183–203 (IIHGWLILSSFMLLFIFTYLY) threads the bilayer. At 204–216 (LEELLRAYNIPMD) the chain is on the lumenal side. A helical transmembrane segment spans residues 217–237 (YPTALLIMWNFGVVGMMSIHW). At 238 to 242 (QGPLR) the chain is on the cytoplasmic side. The helical transmembrane segment at 243–263 (LQQGYLIFVAALMALVFIKYL) threads the bilayer. The Lumenal segment spans residues 264–265 (PE). The chain crosses the membrane as a helical span at residues 266–286 (WTAWAVLAAISIWDLIAVLSP). Residue Asp279 is part of the active site. The Cytoplasmic segment spans residues 287–453 (RGPLRILVET…QNHPDGQEER (167 aa)). An interaction with Mettl2 region spans residues 320–481 (NTVTPQQSQA…ASSYGDWTTT (162 aa)). The span at 327–350 (SQATASSSPSSSNSTTTTRATQNS) shows a compositional bias: low complexity. Disordered regions lie at residues 327–379 (SQAT…DGSV) and 421–449 (EVQS…HPDG). Composition is skewed to polar residues over residues 361–370 (GQRTGNSHPR) and 421–443 (EVQS…TAPD). A helical transmembrane segment spans residues 454 to 474 (GIKLGLGDFIFYSVLVGKASS). Residue Asp461 is part of the active site. Topologically, residues 475–481 (YGDWTTT) are lumenal. Residues 482 to 502 (IACFVAILIGLCLTLLLLAIW) traverse the membrane as a helical segment. Topologically, residues 503–506 (RKAL) are cytoplasmic. Positions 507–509 (PAL) match the PAL motif. Residues 507 to 527 (PALPISITFGLIFCFATSAVV) constitute an intramembrane region (helical). Residues 528–541 (KPFMEDLSAKQVFI) lie on the Cytoplasmic side of the membrane.

Belongs to the peptidase A22A family. As to quaternary structure, homodimer. Component of the gamma-secretase complex, a complex composed of a presenilin (Psn) homodimer, nicastrin (Nct), Aph-1 and Pen-2. Interacts with Mettl2. Isoform 2 shows a better interaction with Mettl2 than isoform 1. Post-translationally, cleaved. The cleavage, which probably takes place between the 6th and the 7th transmembrane regions, may be required for activation of the gamma-secretase activity. In terms of tissue distribution, maternally expressed in nurse and follicle cells. In early embryos, expressed in all or most cells and later increases in CNS and epidermal tissues. In larvae, expression is seen in all imaginal disks, brain and optic lobes. In pupae, expression is seen in eye disk and brain.

It localises to the endoplasmic reticulum membrane. The protein localises to the golgi apparatus membrane. Its function is as follows. Probable catalytic subunit of the gamma-secretase complex, an endoprotease complex that catalyzes the intramembrane cleavage of integral membrane proteins such as Notch receptor. Required for S3 cleavage of Notch, which releases activated Notch protein from the cell membrane. Involved in the patterning of the optic lobes. This chain is Presenilin homolog (Psn), found in Drosophila melanogaster (Fruit fly).